The sequence spans 266 residues: ATP synthase subunit a (266 aa).

7 helical membrane passes run 41–61 (IDTL…FWLA), 98–118 (VIAP…LMDL), 119–139 (VPID…WKIL), 152–172 (LSVL…GGWL), 178–198 (HPLG…EFIA), 216–236 (LVFI…GTPW), and 237–257 (AIFH…LTVV).

The protein belongs to the ATPase A chain family. In terms of assembly, F-type ATPases have 2 components, CF(1) - the catalytic core - and CF(0) - the membrane proton channel. CF(1) has five subunits: alpha(3), beta(3), gamma(1), delta(1), epsilon(1). CF(0) has three main subunits: a(1), b(2) and c(9-12). The alpha and beta chains form an alternating ring which encloses part of the gamma chain. CF(1) is attached to CF(0) by a central stalk formed by the gamma and epsilon chains, while a peripheral stalk is formed by the delta and b chains.

The protein localises to the cell inner membrane. Functionally, key component of the proton channel; it plays a direct role in the translocation of protons across the membrane. The polypeptide is ATP synthase subunit a (Halorhodospira halophila (strain DSM 244 / SL1) (Ectothiorhodospira halophila (strain DSM 244 / SL1))).